The following is a 527-amino-acid chain: MAPIHYLLPIITLGSAALARQDAFEAKCHSFANKIHLPNVHVNFASYVPGGTNLTLADNPSSCGATSQSVSADVCRVAMAVATSNSSEITLEAWFPRNYTGRFLSTGNGGLSGCIQYYDMAYTTGFGFATVGANNGHNGTSGEPFYHHPEVLEDFAYRSIHTGVVIGKKLTKMFYEEGFNKSYYLGCSTGGRQGFKSVQKYPNDFDGVVAGAPAFNFANLISWSAHFYPITGPPGSDTYLSPAMWKVAHDEIIRQCDQIDGAKDGIIEDPSLCNPIMETIICKPGASSDNCLSAAQAKTVREVLYPLYGVNGTLLYPRMQPGSEVLAAPIMYNGQPFAYSTDWYRYVVYNDPNWNGTTFDVQDAAAALAQNPYNIQTWDADLTPFRKSGGKVLTYHGLQDQLISSENSKLYYARVAETMGMPPEELDEFYRFFQISGMGHCGGGDGAYGIGNGLATYSGKDPENNVLMAMVQWVEKGIAPETVRGAKFANGPGSTVEYSRKHCRYPRRNVFKGPGNYTDENAWECVV.

The first 19 residues, 1–19 (MAPIHYLLPIITLGSAALA), serve as a signal peptide directing secretion. Disulfide bonds link Cys-28-Cys-75 and Cys-63-Cys-114. Asn-53, Asn-85, Asn-98, Asn-138, and Asn-180 each carry an N-linked (GlcNAc...) asparagine glycan. Intrachain disulfides connect Cys-187/Cys-441, Cys-256/Cys-273, Cys-282/Cys-291, and Cys-503/Cys-525. The active-site Acyl-ester intermediate is the Ser-188. Asp-257, Asp-260, Ala-262, Asp-264, and Ile-266 together coordinate Ca(2+). N-linked (GlcNAc...) asparagine glycosylation is found at Asn-311 and Asn-355. Active-site charge relay system residues include Asp-400 and His-440. Asn-516 carries N-linked (GlcNAc...) asparagine glycosylation.

Belongs to the tannase family.

It localises to the secreted. The catalysed reaction is feruloyl-polysaccharide + H2O = ferulate + polysaccharide.. Involved in degradation of plant cell walls. Hydrolyzes the feruloyl-arabinose ester bond in arabinoxylans as well as the feruloyl-galactose and feruloyl-arabinose ester bonds in pectin. The polypeptide is Probable feruloyl esterase B-2 (faeB-2) (Aspergillus terreus (strain NIH 2624 / FGSC A1156)).